The following is a 1148-amino-acid chain: Putative transcription factor SEF1 (1148 aa).

The disordered stretch occupies residues 1-51 (MVKDNRDSDQDQDFSSAHMKRQPEQQQLQQHQFPSKKQRISHHDDSHQINH). Ser-8 is subject to Phosphoserine. A DNA-binding region (zn(2)-C6 fungal-type) is located at residues 57–87 (CTHCRQHKIKCDASQNFPHPCSRCEKIGLHC). A disordered region spans residues 148 to 180 (PTPGTIIPNPDSSPSSGSPTSSAAQRDSKVSVQ). Residues 150 to 169 (PGTIIPNPDSSPSSGSPTSS) show a composition bias toward low complexity. At Ser-263 the chain carries Phosphoserine. A disordered region spans residues 524 to 550 (EESEEDNNDSIDNNNNDKRNKKDEPHV). Positions 538–550 (NNDKRNKKDEPHV) are enriched in basic and acidic residues. Ser-806 carries the post-translational modification Phosphoserine. The span at 1029–1050 (RSQSSMSHSRTPIASKSNNMTD) shows a compositional bias: polar residues. The disordered stretch occupies residues 1029-1063 (RSQSSMSHSRTPIASKSNNMTDLHSVVSDPGSSKS).

The protein localises to the nucleus. Its function is as follows. Putative transcription factor that seems to be involved in the sporulation process. Suppresses the lethal phenotype of RPM2 deletion. The sequence is that of Putative transcription factor SEF1 (SEF1) from Saccharomyces cerevisiae (strain ATCC 204508 / S288c) (Baker's yeast).